Reading from the N-terminus, the 901-residue chain is Protein translocase subunit SecA (901 aa).

ATP is bound by residues Gln-87, Gly-105–Thr-109, and Asp-512. The disordered stretch occupies residues His-859–Gln-901. Zn(2+)-binding residues include Cys-885, Cys-887, Cys-896, and His-897. Residues Lys-891–Gln-901 are compositionally biased toward basic residues.

Belongs to the SecA family. Monomer and homodimer. Part of the essential Sec protein translocation apparatus which comprises SecA, SecYEG and auxiliary proteins SecDF-YajC and YidC. The cofactor is Zn(2+).

Its subcellular location is the cell inner membrane. It is found in the cytoplasm. The enzyme catalyses ATP + H2O + cellular proteinSide 1 = ADP + phosphate + cellular proteinSide 2.. In terms of biological role, part of the Sec protein translocase complex. Interacts with the SecYEG preprotein conducting channel. Has a central role in coupling the hydrolysis of ATP to the transfer of proteins into and across the cell membrane, serving both as a receptor for the preprotein-SecB complex and as an ATP-driven molecular motor driving the stepwise translocation of polypeptide chains across the membrane. The sequence is that of Protein translocase subunit SecA from Escherichia coli O9:H4 (strain HS).